A 177-amino-acid polypeptide reads, in one-letter code: 3-hydroxydecanoyl-[acyl-carrier-protein] dehydratase (177 aa).

His-76 is a catalytic residue.

The protein belongs to the thioester dehydratase family. FabA subfamily. Homodimer.

Its subcellular location is the cytoplasm. It carries out the reaction a (3R)-hydroxyacyl-[ACP] = a (2E)-enoyl-[ACP] + H2O. It catalyses the reaction (3R)-hydroxydecanoyl-[ACP] = (2E)-decenoyl-[ACP] + H2O. The enzyme catalyses (2E)-decenoyl-[ACP] = (3Z)-decenoyl-[ACP]. It participates in lipid metabolism; fatty acid biosynthesis. Its function is as follows. Necessary for the introduction of cis unsaturation into fatty acids. Catalyzes the dehydration of (3R)-3-hydroxydecanoyl-ACP to E-(2)-decenoyl-ACP and then its isomerization to Z-(3)-decenoyl-ACP. Can catalyze the dehydratase reaction for beta-hydroxyacyl-ACPs with saturated chain lengths up to 16:0, being most active on intermediate chain length. This is 3-hydroxydecanoyl-[acyl-carrier-protein] dehydratase from Actinobacillus succinogenes (strain ATCC 55618 / DSM 22257 / CCUG 43843 / 130Z).